Reading from the N-terminus, the 603-residue chain is MRVVAGILYIVVMAICGLGIQGGTLQDYPSVYFQDSTLQQDFPTIFFNILAGETYGDFIADLREIVTRTADTKNGSIPVLLNPAHPVPVRERFVKVHLTGRNGKTVILALDVTNLYVAAFSANNVAYFFRDFSALERENLFSGMLTIRLSFTSNYVSLEHKAGVGRENISLGPTPLDEACTKSLWSGTTVTEASIAKALLVVIQMVSEAARFRHIEERVRRSFTAADHDQLTFRPDGLMLSMENEWPSMSLEVQRSIEGGIFIGVVQLQDESFQPLRVDNFNTLSRYTMVALLLFRCGHPRATAGTSSTTPAAAQIIRMPVDVLAGEEYYDEETCTVGEPTRRISGLDGLCMDVRNESNNDGIPIQLWPCGAQRNQQWTFHTDGTIQSMGKCMTSNGYHPGDYVMIFNCSTAPVPDATKWVVSIDGSITNPHSGLVLTAPQAAQTTILLVVRNTHSAKQGRSVGDDVEPIVTYIVGFKYMCLQGNNENNTRVWLEDCAVDRPQQWWALYSDGTIRVDSDRSLCVTSDGHSSRDAIIILTCDGGINQRLVFNTDGTILNPNAQLVMDVRQSNVALRQIILYQPTGNPNQQWMTMITRTRPSLTS.

The first 39 residues, 1–39 (MRVVAGILYIVVMAICGLGIQGGTLQDYPSVYFQDSTLQ), serve as a signal peptide directing secretion. N-linked (GlcNAc...) asparagine glycans are attached at residues Asn74 and Asn168. The active site involves Glu208. Intrachain disulfides connect Cys297/Cys335, Cys351/Cys370, and Cys392/Cys409. Ricin B-type lectin domains lie at 338 to 466 (GEPT…VGDD) and 467 to 593 (VEPI…WMTM). The stretch at 348-388 (DGLCMDVRNESNNDGIPIQLWPCGAQRNQQWTFHTDGTIQS) is one 1-alpha repeat. Asn356 and Asn408 each carry an N-linked (GlcNAc...) asparagine glycan. One copy of the 1-beta repeat lies at 389-430 (MGKCMTSNGYHPGDYVMIFNCSTAPVPDATKWVVSIDGSITN). A 1-gamma repeat occupies 433–466 (SGLVLTAPQAAQTTILLVVRNTHSAKQGRSVGDD). A 2-alpha repeat occupies 478-516 (KYMCLQGNNENNTRVWLEDCAVDRPQQWWALYSDGTIRV). Disulfide bonds link Cys481-Cys497 and Cys523-Cys540. A glycan (N-linked (GlcNAc...) asparagine) is linked at Asn488. A 2-beta repeat occupies 520–558 (RSLCVTSDGHSSRDAIIILTCDGGINQRLVFNTDGTILN). A 2-gamma repeat occupies 561–597 (AQLVMDVRQSNVALRQIILYQPTGNPNQQWMTMITRT).

This sequence belongs to the ribosome-inactivating protein family. Type 2 RIP subfamily. Tetramer of four pairs of disulfide bound A-B chains. In terms of processing, the precursor is processed in two chains, A and B, that are linked by a disulfide bond. Post-translationally, glycosylated. As to expression, expressed in rhizome and more abundantly in leaves (at protein level).

The enzyme catalyses Endohydrolysis of the N-glycosidic bond at one specific adenosine on the 28S rRNA.. Strongly inhibited by asialofetuin and asialomucin. Functionally, galNAc-specific agglutinin. Behaves as a type-2 ribosome-inactivating protein. Inhibits mammalian ribosomes. The A chain is responsible for inhibiting protein synthesis through the catalytic inactivation of 60S ribosomal subunits by removing adenine from position 4,324 of 28S rRNA. The B chain binds to cell receptors and probably facilitates the entry into the cell of the A chain; B chains are also responsible for cell agglutination (lectin activity). Involved in plant defense against insects. Has very low cytotoxic activity against the human tumor cell lines CEM and Molt4. This chain is Ribosome-inactivating protein PMRIPt, found in Polygonatum multiflorum (Solomon's seal).